The following is a 571-amino-acid chain: Membrane protein insertase YidC (571 aa).

Residues 4–24 (TRVFLIFAWLMVAVLLWMEWS) form a helical membrane-spanning segment. Positions 29–76 (APTPAPTTTSAPAAAQSVPGATPGSVPNAQVPGAPGQAAVQAQASATP) are disordered. Low complexity-rich tracts occupy residues 34-43 (PTTTSAPAAA) and 57-76 (AQVP…SATP). 4 consecutive transmembrane segments (helical) span residues 369–389 (LVGN…LVLY), 440–460 (GGCL…WVLV), 483–503 (YFIL…LTPA), and 518–538 (PLVF…YWVV).

This sequence belongs to the OXA1/ALB3/YidC family. Type 1 subfamily. As to quaternary structure, interacts with the Sec translocase complex via SecD. Specifically interacts with transmembrane segments of nascent integral membrane proteins during membrane integration.

The protein localises to the cell inner membrane. Functionally, required for the insertion and/or proper folding and/or complex formation of integral membrane proteins into the membrane. Involved in integration of membrane proteins that insert both dependently and independently of the Sec translocase complex, as well as at least some lipoproteins. Aids folding of multispanning membrane proteins. The chain is Membrane protein insertase YidC from Stenotrophomonas maltophilia (strain R551-3).